Here is a 385-residue protein sequence, read N- to C-terminus: 1-deoxy-D-xylulose 5-phosphate reductoisomerase (385 aa).

The NADPH site is built by Thr10, Gly11, Ser12, Ile13, Lys37, and Asn124. Lys125 lines the 1-deoxy-D-xylulose 5-phosphate pocket. Glu126 lines the NADPH pocket. Asp150 serves as a coordination point for Mn(2+). 1-deoxy-D-xylulose 5-phosphate is bound by residues Ser151, Glu152, Ser176, and His199. Glu152 contributes to the Mn(2+) binding site. Residue Gly205 participates in NADPH binding. 1-deoxy-D-xylulose 5-phosphate is bound by residues Ser212, Asn217, Lys218, and Glu221. Mn(2+) is bound at residue Glu221.

The protein belongs to the DXR family. Mg(2+) is required as a cofactor. It depends on Mn(2+) as a cofactor.

It catalyses the reaction 2-C-methyl-D-erythritol 4-phosphate + NADP(+) = 1-deoxy-D-xylulose 5-phosphate + NADPH + H(+). It participates in isoprenoid biosynthesis; isopentenyl diphosphate biosynthesis via DXP pathway; isopentenyl diphosphate from 1-deoxy-D-xylulose 5-phosphate: step 1/6. Catalyzes the NADPH-dependent rearrangement and reduction of 1-deoxy-D-xylulose-5-phosphate (DXP) to 2-C-methyl-D-erythritol 4-phosphate (MEP). The chain is 1-deoxy-D-xylulose 5-phosphate reductoisomerase from Clostridium botulinum (strain ATCC 19397 / Type A).